Reading from the N-terminus, the 64-residue chain is Translation machinery-associated protein 7 homolog (64 aa).

The interval 1-64 is disordered; that stretch reads MSGREGGKKK…QGGIKKSGKK (64 aa). A coiled-coil region spans residues 21–50; sequence EMDEDTAAFKAKQKEQQKALEAAKQKATKG. Residues 32-44 are compositionally biased toward basic and acidic residues; the sequence is KQKEQQKALEAAK.

Belongs to the TMA7 family.

The polypeptide is Translation machinery-associated protein 7 homolog (Anopheles gambiae (African malaria mosquito)).